The chain runs to 182 residues: UPF0148 protein VNG_2366C (182 aa).

Positions 1–162 are disordered; it reads MSNTDDGFDK…RASDADDPRT (162 aa). Basic and acidic residues-rich tracts occupy residues 7-33 and 47-62; these read GFDK…ETAR and DHCD…HDGE. Residues 105–122 show a composition bias toward low complexity; that stretch reads PDTSSSTAAATDDVPTAA. Basic and acidic residues predominate over residues 153-162; it reads RASDADDPRT.

It belongs to the UPF0148 family.

This is UPF0148 protein VNG_2366C from Halobacterium salinarum (strain ATCC 700922 / JCM 11081 / NRC-1) (Halobacterium halobium).